Reading from the N-terminus, the 644-residue chain is Chaperone protein DnaK (644 aa).

At T200 the chain carries Phosphothreonine; by autocatalysis. A disordered region spans residues V603–K644. The span at G612–A630 shows a compositional bias: low complexity. Over residues A635–K644 the composition is skewed to basic and acidic residues.

This sequence belongs to the heat shock protein 70 family.

In terms of biological role, acts as a chaperone. This Polynucleobacter asymbioticus (strain DSM 18221 / CIP 109841 / QLW-P1DMWA-1) (Polynucleobacter necessarius subsp. asymbioticus) protein is Chaperone protein DnaK.